We begin with the raw amino-acid sequence, 503 residues long: Aminoaldehyde dehydrogenase 1, peroxisomal (503 aa).

Na(+) contacts are provided by Ile28, Asp99, and Leu189. 238-245 (GSTMTGSK) is an NAD(+) binding site. The active-site Proton acceptor is Glu260. NAD(+)-binding residues include Cys294 and Glu393. Cys294 serves as the catalytic Nucleophile.

The protein belongs to the aldehyde dehydrogenase family. In terms of tissue distribution, expressed in leaves, flowers and fruits.

Its subcellular location is the cytoplasm. The protein localises to the cytosol. It catalyses the reaction 4-aminobutanal + NAD(+) + H2O = 4-aminobutanoate + NADH + 2 H(+). The catalysed reaction is 3-aminopropanal + NAD(+) + H2O = beta-alanine + NADH + 2 H(+). It participates in amine and polyamine biosynthesis; betaine biosynthesis via choline pathway; betaine from betaine aldehyde: step 1/1. In terms of biological role, dehydrogenase that catalyzes the oxidation of several aminoaldehydes. Metabolizes and detoxifies aldehyde products of polyamine degradation to non-toxic amino acids. Catalyzes the oxidation of 4-aminobutanal and 3-aminopropanal to 4-aminobutanoate and beta-alanine, respectively. This is Aminoaldehyde dehydrogenase 1, peroxisomal from Malus domestica (Apple).